The sequence spans 755 residues: Kojibiose phosphorylase (755 aa).

333 to 334 (WD) is a substrate binding site. The Proton donor role is filled by Glu-473. A substrate-binding site is contributed by 573–574 (KQ).

Belongs to the glycosyl hydrolase 65 family.

The enzyme catalyses kojibiose + phosphate = beta-D-glucose 1-phosphate + D-glucose. In vitro catalyzes the phosphorolysis of D-kojibiose into beta-D-glucose 1-phosphate and D-glucose. No other disaccharides tested substitute for D-kojibiose. In the reverse direction disaccharides can be formed from beta-D-glucose 1-phosphate plus D-glucose, L-sorbose, D-sorbitol, L-iditol or 1,5-anhydro-D-glucitol, but with low efficiency. The beta-D-glucose 1-phosphate product is the substrate for YcjU (AC P77366), the next apparent enzyme in the putative biochemical pathway encoded in this locus (yjcM to ycjW). The protein is Kojibiose phosphorylase (ycjT) of Escherichia coli (strain K12).